The sequence spans 319 residues: HTH-type transcriptional regulator YidZ (319 aa).

One can recognise an HTH lysR-type domain in the interval 8–65 (LDLNLLLCLQLLMQERSVTKAAKRMNVTPSAVSKSLAKLRAWFDDPLFVNTPLGLAPT). Positions 25 to 44 (VTKAAKRMNVTPSAVSKSLA) form a DNA-binding region, H-T-H motif.

Belongs to the LysR transcriptional regulatory family.

Its function is as follows. Involved in anaerobic NO protection. In Salmonella heidelberg (strain SL476), this protein is HTH-type transcriptional regulator YidZ.